A 480-amino-acid polypeptide reads, in one-letter code: Aspartyl/glutamyl-tRNA(Asn/Gln) amidotransferase subunit B (480 aa).

The protein belongs to the GatB/GatE family. GatB subfamily. As to quaternary structure, heterotrimer of A, B and C subunits.

The enzyme catalyses L-glutamyl-tRNA(Gln) + L-glutamine + ATP + H2O = L-glutaminyl-tRNA(Gln) + L-glutamate + ADP + phosphate + H(+). It carries out the reaction L-aspartyl-tRNA(Asn) + L-glutamine + ATP + H2O = L-asparaginyl-tRNA(Asn) + L-glutamate + ADP + phosphate + 2 H(+). Functionally, allows the formation of correctly charged Asn-tRNA(Asn) or Gln-tRNA(Gln) through the transamidation of misacylated Asp-tRNA(Asn) or Glu-tRNA(Gln) in organisms which lack either or both of asparaginyl-tRNA or glutaminyl-tRNA synthetases. The reaction takes place in the presence of glutamine and ATP through an activated phospho-Asp-tRNA(Asn) or phospho-Glu-tRNA(Gln). This is Aspartyl/glutamyl-tRNA(Asn/Gln) amidotransferase subunit B from Streptococcus pneumoniae (strain Hungary19A-6).